We begin with the raw amino-acid sequence, 273 residues long: Transposable element Tcb1 transposase (273 aa).

The protein belongs to the transposase 5 family.

Its subcellular location is the nucleus. In terms of biological role, probably essential for transposable element Tcb1 transposition. The insertion of Tcb1 is the main cause of spontaneous mutations. The protein is Transposable element Tcb1 transposase of Caenorhabditis briggsae.